The primary structure comprises 245 residues: Adenosylcobinamide-GDP ribazoletransferase (245 aa).

5 helical membrane passes run 31–51 (FGRAVLCYPLVGVLIGVVLYA), 61–81 (PLLQAALLLSLWVALSGALHL), 113–133 (VAVVVLVLVLLLKFSALAALL), 138–158 (AGLLPLAPWLARSSLPLLFLT), and 192–212 (LAFGLAGLLALLVTLMLFAWL).

Belongs to the CobS family. It depends on Mg(2+) as a cofactor.

Its subcellular location is the cell inner membrane. The enzyme catalyses alpha-ribazole + adenosylcob(III)inamide-GDP = adenosylcob(III)alamin + GMP + H(+). It catalyses the reaction alpha-ribazole 5'-phosphate + adenosylcob(III)inamide-GDP = adenosylcob(III)alamin 5'-phosphate + GMP + H(+). It participates in cofactor biosynthesis; adenosylcobalamin biosynthesis; adenosylcobalamin from cob(II)yrinate a,c-diamide: step 7/7. Functionally, joins adenosylcobinamide-GDP and alpha-ribazole to generate adenosylcobalamin (Ado-cobalamin). Also synthesizes adenosylcobalamin 5'-phosphate from adenosylcobinamide-GDP and alpha-ribazole 5'-phosphate. This chain is Adenosylcobinamide-GDP ribazoletransferase, found in Pseudomonas aeruginosa (strain UCBPP-PA14).